The primary structure comprises 271 residues: Urease accessory protein UreD (271 aa).

This sequence belongs to the UreD family. In terms of assembly, ureD, UreF and UreG form a complex that acts as a GTP-hydrolysis-dependent molecular chaperone, activating the urease apoprotein by helping to assemble the nickel containing metallocenter of UreC. The UreE protein probably delivers the nickel.

It localises to the cytoplasm. Its function is as follows. Required for maturation of urease via the functional incorporation of the urease nickel metallocenter. The protein is Urease accessory protein UreD of Halalkalibacterium halodurans (strain ATCC BAA-125 / DSM 18197 / FERM 7344 / JCM 9153 / C-125) (Bacillus halodurans).